Consider the following 819-residue polypeptide: Kinesin-like protein KIN-13A (819 aa).

The segment at 150–178 is disordered; the sequence is EPFEPSPFIPKEMDEDDDDMLPGSQPGPS. Residues 199-535 form the Kinesin motor domain; sequence KIKVVVRKRP…LRYADRVKSL (337 aa). 289-296 serves as a coordination point for ATP; it reads GQTGSGKT. Residues 534-729 form a disordered region; sequence SLSKGSNTRK…QSEKESSCDD (196 aa). Over residues 550-562 the composition is skewed to low complexity; that stretch reads TIPSSKDSSSAPS. 2 stretches are compositionally biased toward basic and acidic residues: residues 577-589 and 614-631; these read QEKRPVETSRKAA and RGKEENGSSGLNDRERVD. Positions 632-652 are enriched in polar residues; the sequence is LNSSRISYNSKPQSVQSSANL. Basic and acidic residues predominate over residues 669-686; the sequence is YRDDKPERQSNYAKKDSG. Residues 697-719 show a composition bias toward low complexity; the sequence is QQAKQLQQQQRPTSASASQNSSR. Residues 736–767 are a coiled coil; it reads LEEEEALIAAHRKEIENTMEIVREEMNLLAEV.

This sequence belongs to the TRAFAC class myosin-kinesin ATPase superfamily. Kinesin family. KIN-13 subfamily. In terms of tissue distribution, ubiquitous.

It is found in the microsome. In Oryza sativa subsp. japonica (Rice), this protein is Kinesin-like protein KIN-13A.